The primary structure comprises 84 residues: M-myrmeciitoxin-Mb2a (84 aa).

The first 21 residues, 1–21 (MKLSCLLLTLAIIFVLTIVHA), serve as a signal peptide directing secretion. Residues 22 to 48 (PNVKAKALADPESDAVGFADAVGEADP) constitute a propeptide that is removed on maturation.

Belongs to the formicidae venom precursor-01 superfamily. Ant pilosulin family. Expressed by the venom gland.

It is found in the secreted. In terms of biological role, shows activity against E.coli and S.aureus (MIC&lt;6.25 uM), moderate activity against P.aeruginosa (MIC&lt;25 uM), weak activity against B.subtilis (MIC&lt;50 uM), and has no effect against L.garvieae, C.albicans, and S.cerevisiae. Has no hemolytic nor cytolytic activity. Causes an IgE-independent histamine release. The polypeptide is M-myrmeciitoxin-Mb2a (Myrmecia banksi (Jack jumper ant)).